Consider the following 129-residue polypeptide: MLTPLQIYFPIGVVLLVAVVLAFTMLGLANVLGPRRPSLVKQTPFECGSEPIGSARERFGVKFYVVALLFIVFDIEAIFLYPWAVLLLPDGQGYPGLGWPGFISMGIFVFTLVAGLVYVWKKGVLDWAD.

The next 3 membrane-spanning stretches (helical) occupy residues 9 to 29 (FPIG…LGLA), 68 to 88 (LLFI…VLLL), and 97 to 117 (LGWP…AGLV).

Belongs to the complex I subunit 3 family. In terms of assembly, NDH-1 is composed of 14 different subunits. Subunits NuoA, H, J, K, L, M, N constitute the membrane sector of the complex.

It localises to the cell inner membrane. The enzyme catalyses a quinone + NADH + 5 H(+)(in) = a quinol + NAD(+) + 4 H(+)(out). Functionally, NDH-1 shuttles electrons from NADH, via FMN and iron-sulfur (Fe-S) centers, to quinones in the respiratory chain. The immediate electron acceptor for the enzyme in this species is believed to be ubiquinone. Couples the redox reaction to proton translocation (for every two electrons transferred, four hydrogen ions are translocated across the cytoplasmic membrane), and thus conserves the redox energy in a proton gradient. The polypeptide is NADH-quinone oxidoreductase subunit A (Anaeromyxobacter dehalogenans (strain 2CP-C)).